A 419-amino-acid chain; its full sequence is Protein arginine N-methyltransferase 8-B (419 aa).

Residues 1-14 (MGLRHSSRCLLLRR) show a composition bias toward basic residues. The tract at residues 1–79 (MGLRHSSRCL…HTPHVSALSA (79 aa)) is disordered. Residue G2 is the site of N-myristoyl glycine attachment. Low complexity predominate over residues 33–63 (QHQQQQSISSIPSSQSLQPSPLPKPVTSVHH). Position 83 is an omega-N-methylarginine (R83). R98 is subject to Asymmetric dimethylarginine. Residues 98-402 (RDYYFDSYAH…RDLDFTFELD (305 aa)) form the SAM-dependent MTase PRMT-type domain. Residues H111, R120, G144, 144–147 (GSGT), E166, and E195 contribute to the S-adenosyl-L-methionine site. Residues E210 and E219 contribute to the active site.

It belongs to the class I-like SAM-binding methyltransferase superfamily. Protein arginine N-methyltransferase family. PRMT8 subfamily. As to quaternary structure, homodimer. Tetramer; individual homodimers associates to form a homotetramer. Homooctamer; individual homodimers associates to form a homooctamer and homooligomerization is required for proper localization to the cell membrane.

It is found in the cell membrane. It catalyses the reaction L-arginyl-[protein] + S-adenosyl-L-methionine = N(omega)-methyl-L-arginyl-[protein] + S-adenosyl-L-homocysteine + H(+). The catalysed reaction is L-arginyl-[protein] + 2 S-adenosyl-L-methionine = N(omega),N(omega)-dimethyl-L-arginyl-[protein] + 2 S-adenosyl-L-homocysteine + 2 H(+). In terms of biological role, S-adenosyl-L-methionine-dependent and membrane-associated arginine methyltransferase that can both catalyze the formation of omega-N monomethylarginine (MMA) and asymmetrical dimethylarginine (aDMA). The chain is Protein arginine N-methyltransferase 8-B (prmt8b) from Danio rerio (Zebrafish).